Consider the following 246-residue polypeptide: Probable 2-phosphosulfolactate phosphatase (246 aa).

The protein belongs to the ComB family. It depends on Mg(2+) as a cofactor.

It catalyses the reaction (2R)-O-phospho-3-sulfolactate + H2O = (2R)-3-sulfolactate + phosphate. This chain is Probable 2-phosphosulfolactate phosphatase, found in Nostoc punctiforme (strain ATCC 29133 / PCC 73102).